The following is a 491-amino-acid chain: Nickel-binding protein NikA (491 aa).

Residues 1-18 form the signal peptide; that stretch reads MKFKRLATIFSAVLVLSG. Cys19 carries N-palmitoyl cysteine lipidation. The S-diacylglycerol cysteine moiety is linked to residue Cys19.

Belongs to the bacterial solute-binding protein 5 family. In terms of assembly, the complex is composed of two ATP-binding proteins (NikD and NikE), two transmembrane proteins (NikB and NikC) and a solute-binding protein (NikA).

It localises to the cell membrane. Part of the ABC transporter complex NikABCDE (Opp2) involved in nickel import. Binds nickel and transfers it to the membrane-bound permease. Required for full urease activity and plays a significant role in the virulence of S.aureus during urinary tract infection (UTI). May bind nickel via a nickel-chelator. The chain is Nickel-binding protein NikA from Staphylococcus aureus (strain NCTC 8325 / PS 47).